A 341-amino-acid chain; its full sequence is Hyaluronidase A (341 aa).

N-linked (GlcNAc...) asparagine glycans are attached at residues Asn3, Asn68, and Asn83. Disulfide bonds link Cys23/Cys311 and Cys189/Cys201.

This sequence belongs to the glycosyl hydrolase 56 family. As to expression, expressed by the venom gland.

Its subcellular location is the secreted. It catalyses the reaction Random hydrolysis of (1-&gt;4)-linkages between N-acetyl-beta-D-glucosamine and D-glucuronate residues in hyaluronate.. In terms of biological role, may hydrolyze high molecular weight hyaluronic acid to produce small oligosaccharides. This chain is Hyaluronidase A, found in Vespa velutina (Asian yellow-legged hornet).